The sequence spans 79 residues: UPF0291 protein lp_2062 (79 aa).

This sequence belongs to the UPF0291 family.

Its subcellular location is the cytoplasm. The protein is UPF0291 protein lp_2062 of Lactiplantibacillus plantarum (strain ATCC BAA-793 / NCIMB 8826 / WCFS1) (Lactobacillus plantarum).